Here is a 544-residue protein sequence, read N- to C-terminus: CTP synthase (544 aa).

The amidoligase domain stretch occupies residues 1 to 266 (MTKFIFVTGG…DDLICERFGL (266 aa)). Residue serine 13 participates in CTP binding. Serine 13 contributes to the UTP binding site. Residues 14–19 (SLGKGI) and aspartate 71 contribute to the ATP site. The Mg(2+) site is built by aspartate 71 and glutamate 140. CTP contacts are provided by residues 147–149 (DIE), 187–192 (KTKPTQ), and lysine 223. Residues 187–192 (KTKPTQ) and lysine 223 contribute to the UTP site. The Glutamine amidotransferase type-1 domain occupies 291–543 (TVAMVGKYVE…VKAAKNYSEA (253 aa)). Position 354 (glycine 354) interacts with L-glutamine. Cysteine 381 serves as the catalytic Nucleophile; for glutamine hydrolysis. Residues 382-385 (LGMQ), glutamate 404, and arginine 471 each bind L-glutamine. Catalysis depends on residues histidine 516 and glutamate 518.

It belongs to the CTP synthase family. Homotetramer.

The enzyme catalyses UTP + L-glutamine + ATP + H2O = CTP + L-glutamate + ADP + phosphate + 2 H(+). It catalyses the reaction L-glutamine + H2O = L-glutamate + NH4(+). The catalysed reaction is UTP + NH4(+) + ATP = CTP + ADP + phosphate + 2 H(+). It functions in the pathway pyrimidine metabolism; CTP biosynthesis via de novo pathway; CTP from UDP: step 2/2. With respect to regulation, allosterically activated by GTP, when glutamine is the substrate; GTP has no effect on the reaction when ammonia is the substrate. The allosteric effector GTP functions by stabilizing the protein conformation that binds the tetrahedral intermediate(s) formed during glutamine hydrolysis. Inhibited by the product CTP, via allosteric rather than competitive inhibition. Its function is as follows. Catalyzes the ATP-dependent amination of UTP to CTP with either L-glutamine or ammonia as the source of nitrogen. Regulates intracellular CTP levels through interactions with the four ribonucleotide triphosphates. The chain is CTP synthase from Psychrobacter cryohalolentis (strain ATCC BAA-1226 / DSM 17306 / VKM B-2378 / K5).